Reading from the N-terminus, the 244-residue chain is Ferredoxin--NADP reductase B (244 aa).

Residues 4–106 enclose the FAD-binding FR-type domain; it reads AEPFEARLVA…VGPHGLFTRD (103 aa). FAD is bound by residues 55–58 and Thr-120; that span reads RAYS.

It belongs to the ferredoxin--NADP reductase type 1 family. FAD is required as a cofactor.

It catalyses the reaction 2 reduced [4Fe-4S]-[ferredoxin] + NADP(+) + H(+) = 2 oxidized [4Fe-4S]-[ferredoxin] + NADPH. In terms of biological role, transports electrons between NADPH and ferredoxin. Can transfer electrons to ferredoxins Fdx2 and Fdx8. Prefers NADPH to NADH. In Sorangium cellulosum (strain So ce56) (Polyangium cellulosum (strain So ce56)), this protein is Ferredoxin--NADP reductase B.